Here is a 91-residue protein sequence, read N- to C-terminus: Sm-like protein LSM6A (91 aa).

The 73-residue stretch at 14 to 86 folds into the Sm domain; it reads TPADFLKSIR…VLYISTVNMT (73 aa).

This sequence belongs to the snRNP Sm proteins family. In terms of assembly, component of the heptameric LSM1-LSM7 complex that forms a seven-membered ring structure with a donut shape. The LSM subunits are arranged in the order LSM1, LSM2, LSM3, LSM6, LSM5, LSM7 and LSM4. Component of the heptameric LSM2-LSM8 complex that forms a seven-membered ring structure with a donut shape. The LSM subunits are arranged in the order LSM8, LSM2, LSM3, LSM6, LSM5, LSM7 and LSM4. LSM6A subunit interacts only with its two neighboring subunits, LSM3A or LSM3B and LSM5. Expressed in roots, leaves, stems, flowers and siliques.

It localises to the cytoplasm. The protein resides in the nucleus. Component of LSM protein complexes, which are involved in RNA processing. Component of the cytoplasmic LSM1-LSM7 complex which is involved in mRNA degradation by promoting decapping and leading to accurate 5'-3' mRNA decay. The cytoplasmic LSM1-LSM7 complex regulates developmental gene expression by the decapping of specific development-related transcripts. Component of the nuclear LSM2-LSM8 complex which is involved splicing nuclear mRNAs. LSM2-LSM8 binds directly to the U6 small nuclear RNAs (snRNAs) and is essential for accurate splicing of selected development-related mRNAs through the stabilization of the spliceosomal U6 snRNA. Plays a critical role in the regulation of development-related gene expression. The sequence is that of Sm-like protein LSM6A from Arabidopsis thaliana (Mouse-ear cress).